The primary structure comprises 345 residues: Diacylglycerol O-acyltransferase 1 (345 aa).

Residues 1 to 49 (MSEETSIPGIIASTPPISKDSRRNVSHWLQALAVFLHSVSLTLTASWYT) are Cytoplasmic-facing. A helical transmembrane segment spans residues 50-70 (VLWAFLPFWPFLIVYLIWLIY). The Lumenal portion of the chain corresponds to 71–113 (DDGFVTGKDRQKRWLRNAPPYRWFCHYFPIRLHKTTELDSEKN). The chain crosses the membrane as a helical span at residues 114 to 134 (YIFGYHPHGIISLGAFGGFAS). Residues 135 to 141 (EGADFSK) are Cytoplasmic-facing. The helical transmembrane segment at 142 to 162 (LFPGINVSVLTLNSNFYVPVY) threads the bilayer. The Lumenal segment spans residues 163-216 (RDYLMALNINSVSKKSCVSILSRKPGDSVLIVIGGAQESLLSRPGQNNLVLKKR). The helical transmembrane segment at 217 to 237 (FGFVKLAFLTGSSLVPCFAFG) threads the bilayer. The Cytoplasmic segment spans residues 238–345 (ESDIFEQVDN…NRISELKLSA (108 aa)).

This sequence belongs to the diacylglycerol acyltransferase family.

The protein localises to the lipid droplet. Its subcellular location is the endoplasmic reticulum membrane. It carries out the reaction an acyl-CoA + a 1,2-diacyl-sn-glycerol = a triacyl-sn-glycerol + CoA. The enzyme catalyses a 2-acylglycerol + an acyl-CoA = a 1,2-diacyl-sn-glycerol + CoA. It participates in glycerolipid metabolism; triacylglycerol biosynthesis. Its function is as follows. Catalyzes the terminal and only committed step in triacylglycerol (TAG) synthesis by using diacylglycerol (DAG) and fatty acyl-CoA as substrates. Required for storage lipid synthesis. Major DAG esterifying enzyme in stationary phase when TAG production is particularly active. Involved in lipid particle synthesis from the endoplasmic reticulum, promoting localized TAG production at discrete ER subdomains. The sequence is that of Diacylglycerol O-acyltransferase 1 (dga1) from Schizosaccharomyces pombe (strain 972 / ATCC 24843) (Fission yeast).